Here is a 238-residue protein sequence, read N- to C-terminus: Flagellar L-ring protein (238 aa).

The signal sequence occupies residues 1–17; that stretch reads MKRRLLAAGCAMLLLSG. Cys18 is lipidated: N-palmitoyl cysteine. The S-diacylglycerol cysteine moiety is linked to residue Cys18. The tract at residues 22–50 is disordered; sequence RQQPSPVPPVTQPQAYAEPEDTAANPGSL.

It belongs to the FlgH family. The basal body constitutes a major portion of the flagellar organelle and consists of four rings (L,P,S, and M) mounted on a central rod.

It is found in the cell outer membrane. Its subcellular location is the bacterial flagellum basal body. Functionally, assembles around the rod to form the L-ring and probably protects the motor/basal body from shearing forces during rotation. The sequence is that of Flagellar L-ring protein from Nitratidesulfovibrio vulgaris (strain DSM 19637 / Miyazaki F) (Desulfovibrio vulgaris).